We begin with the raw amino-acid sequence, 73 residues long: Acyl carrier protein homolog (73 aa).

Positions 1–72 (MAIKEWIITQ…DIIVLIEQKS (72 aa)) constitute a Carrier domain. At S32 the chain carries O-(pantetheine 4'-phosphoryl)serine.

Post-translationally, 4'-phosphopantetheine is transferred from CoA to a specific serine of the apo-ACP-like protein.

It functions in the pathway lipid metabolism; fatty acid biosynthesis. Functionally, carrier of the growing fatty acid chain in fatty acid biosynthesis. This chain is Acyl carrier protein homolog, found in Mycoplasmopsis pulmonis (strain UAB CTIP) (Mycoplasma pulmonis).